A 301-amino-acid polypeptide reads, in one-letter code: 33 kDa chaperonin (301 aa).

2 disulfides stabilise this stretch: cysteine 240–cysteine 242 and cysteine 273–cysteine 276.

The protein belongs to the HSP33 family. Under oxidizing conditions two disulfide bonds are formed involving the reactive cysteines. Under reducing conditions zinc is bound to the reactive cysteines and the protein is inactive.

It localises to the cytoplasm. Functionally, redox regulated molecular chaperone. Protects both thermally unfolding and oxidatively damaged proteins from irreversible aggregation. Plays an important role in the bacterial defense system toward oxidative stress. This chain is 33 kDa chaperonin, found in Rippkaea orientalis (strain PCC 8801 / RF-1) (Cyanothece sp. (strain PCC 8801)).